The chain runs to 914 residues: High affinity cAMP-specific and IBMX-insensitive 3',5'-cyclic phosphodiesterase 8 (914 aa).

2 disordered regions span residues 1-27 (MGCSPSTLPPAPSAGQTGERGSLPLDA) and 113-138 (RRATGSTGTSGTSSSGGNSRPGHRKS). Residues 116-129 (TGSTGTSGTSSSGG) show a composition bias toward low complexity. Positions 312–359 (TQQALYTALHRLKEVVLITDDLLRIQYANRATERLLNMRLDEIISKQL) constitute a PAS domain. Residues 558 to 893 (TAAIVPAKMK…SQWKKYDEQG (336 aa)) form the PDEase domain. The Proton donor role is filled by histidine 640. Histidine 644, histidine 682, aspartate 683, and aspartate 799 together coordinate a divalent metal cation.

It belongs to the cyclic nucleotide phosphodiesterase family. PDE8 subfamily. Requires a divalent metal cation as cofactor. Expressed in Malpighian tubules and head.

The enzyme catalyses 3',5'-cyclic AMP + H2O = AMP + H(+). It participates in purine metabolism; 3',5'-cyclic AMP degradation; AMP from 3',5'-cyclic AMP: step 1/1. Hydrolyzes the second messenger cAMP, which is a key regulator of many important physiological processes. Involved in the positive regulation of MAP kinase signaling and in inhibiting oxidative stress-induced cell death. This Drosophila melanogaster (Fruit fly) protein is High affinity cAMP-specific and IBMX-insensitive 3',5'-cyclic phosphodiesterase 8.